The primary structure comprises 291 residues: Ubiquinone biosynthesis protein COQ4, mitochondrial (291 aa).

A mitochondrion-targeting transit peptide spans 1-37; it reads MLGRRSVSLLRGLTELPVSSRAHTALRALSVPQTRRN. Residues H169, D170, H173, and E185 each coordinate Zn(2+). The segment covering 271-283 has biased composition (basic and acidic residues); that stretch reads PLNEAKEAAERRS. The tract at residues 271 to 291 is disordered; sequence PLNEAKEAAERRSKTTQNQIY.

The protein belongs to the COQ4 family. Component of a multi-subunit COQ enzyme complex, composed of at least COQ3, COQ4, COQ5, COQ6, COQ7 and COQ9. The cofactor is Zn(2+).

It is found in the mitochondrion inner membrane. The enzyme catalyses a 4-hydroxy-3-methoxy-5-(all-trans-polyprenyl)benzoate + H(+) = a 2-methoxy-6-(all-trans-polyprenyl)phenol + CO2. Its pathway is cofactor biosynthesis; ubiquinone biosynthesis. Its function is as follows. Lyase that catalyzes the C1-decarboxylation of 4-hydroxy-3-methoxy-5-(all-trans-polyprenyl)benzoic acid into 2-methoxy-6-(all-trans-polyprenyl)phenol during ubiquinone biosynthesis. This Coprinopsis cinerea (strain Okayama-7 / 130 / ATCC MYA-4618 / FGSC 9003) (Inky cap fungus) protein is Ubiquinone biosynthesis protein COQ4, mitochondrial.